The sequence spans 117 residues: Large ribosomal subunit protein bL20 (117 aa).

This sequence belongs to the bacterial ribosomal protein bL20 family.

In terms of biological role, binds directly to 23S ribosomal RNA and is necessary for the in vitro assembly process of the 50S ribosomal subunit. It is not involved in the protein synthesizing functions of that subunit. The sequence is that of Large ribosomal subunit protein bL20 from Oleidesulfovibrio alaskensis (strain ATCC BAA-1058 / DSM 17464 / G20) (Desulfovibrio alaskensis).